A 411-amino-acid polypeptide reads, in one-letter code: MKHDLIRRLTTYAKIDTQSDYASTTVPTTDGQWTLARLLVDELKEIGMSDVTVDANGYVMATLPANTDADIPTIGFLAHLDTATDFTGTNVNPQIVEAYDGEDLVLNATLPVILSPKDFPALKNYVGHTLMTTDGTTLLGADNKAGIAEIMTAMHHLITHPEIKHGRIRVAFTPDEEIGRGPHHFDVAAFDAKFAYTVDGGPLGELEYESFNAAAAEIIFHGTNVHPGTAKDKMVNSQKHAMAFQNRLPGDEAPEFTDGFEGFYHLISFEGSVEKTTVQYIIRDFDRSKFEARKHFLTALVEEWNKKYGAGSVEIKLNDQYYNMREKIEPHMEIVDIAHAAMESRGVTPIIKPIRGGTDGSQLSYMGLPTPNIFTGGENYHGKFEFISVDNMVKATEVVVAIAERFAQSAK.

Residue histidine 79 participates in Zn(2+) binding. Residue aspartate 81 is part of the active site. Aspartate 142 contacts Zn(2+). Glutamate 176 (proton acceptor) is an active-site residue. Residues glutamate 177, aspartate 199, and histidine 381 each contribute to the Zn(2+) site.

The protein belongs to the peptidase M20B family. The cofactor is Zn(2+).

The protein resides in the cytoplasm. It catalyses the reaction Release of the N-terminal residue from a tripeptide.. Functionally, cleaves the N-terminal amino acid of tripeptides. This is Peptidase T from Exiguobacterium sibiricum (strain DSM 17290 / CCUG 55495 / CIP 109462 / JCM 13490 / 255-15).